Consider the following 246-residue polypeptide: N-alpha-acetyltransferase 11 (246 aa).

The interaction with NAA15 stretch occupies residues 1-58; that stretch reads MNIRNARPEDLMNMQHCNLLCLPENYQMKYYFYHGLSWPQLSYIAEDEDGKIVGYVLA. The region spanning 1–152 is the N-acetyltransferase domain; the sequence is MNIRNARPED…DAYAMKRDLA (152 aa). The segment at 175-246 is disordered; sequence EENQEAQDST…DSSEYLDSTS (72 aa). The span at 230–246 shows a compositional bias: polar residues; the sequence is SHSTDVQDSSEYLDSTS.

This sequence belongs to the acetyltransferase family. ARD1 subfamily. As to quaternary structure, component of the N-terminal acetyltransferase A (NatA) complex composed of NAA11 and NAA15. Interacts with HIF1A.

It localises to the cytoplasm. The protein resides in the nucleus. It carries out the reaction N-terminal glycyl-[protein] + acetyl-CoA = N-terminal N(alpha)-acetylglycyl-[protein] + CoA + H(+). It catalyses the reaction N-terminal L-alanyl-[protein] + acetyl-CoA = N-terminal N(alpha)-acetyl-L-alanyl-[protein] + CoA + H(+). The catalysed reaction is N-terminal L-seryl-[protein] + acetyl-CoA = N-terminal N(alpha)-acetyl-L-seryl-[protein] + CoA + H(+). The enzyme catalyses N-terminal L-valyl-[protein] + acetyl-CoA = N-terminal N(alpha)-acetyl-L-valyl-[protein] + CoA + H(+). It carries out the reaction N-terminal L-cysteinyl-[protein] + acetyl-CoA = N-terminal N(alpha)-acetyl-L-cysteinyl-[protein] + CoA + H(+). It catalyses the reaction N-terminal L-threonyl-[protein] + acetyl-CoA = N-terminal N(alpha)-acetyl-L-threonyl-[protein] + CoA + H(+). In terms of biological role, displays alpha (N-terminal) acetyltransferase activity. Proposed alternative catalytic subunit of the N-terminal acetyltransferase A (NatA) complex. This is N-alpha-acetyltransferase 11 (Naa11) from Rattus norvegicus (Rat).